Here is a 1124-residue protein sequence, read N- to C-terminus: Phytochrome A (1124 aa).

Residues 1 to 19 (MSTTRPSQSSNNSGRSRNS) are compositionally biased toward low complexity. The interval 1–21 (MSTTRPSQSSNNSGRSRNSAR) is disordered. One can recognise a GAF domain in the interval 218 to 401 (SMERLCDTMV…VFAIHVNKEI (184 aa)). Residue C323 coordinates phytochromobilin. PAS domains follow at residues 617-687 (VTSE…LQGE) and 750-821 (DYKA…VNFG). One can recognise a Histidine kinase domain in the interval 901-1120 (YMKRQIRNPL…ILSVELAAAH (220 aa)).

It belongs to the phytochrome family. Homodimer. In terms of processing, contains one covalently linked phytochromobilin chromophore.

Functionally, regulatory photoreceptor which exists in two forms that are reversibly interconvertible by light: the Pr form that absorbs maximally in the red region of the spectrum and the Pfr form that absorbs maximally in the far-red region. Photoconversion of Pr to Pfr induces an array of morphogenic responses, whereas reconversion of Pfr to Pr cancels the induction of those responses. Pfr controls the expression of a number of nuclear genes including those encoding the small subunit of ribulose-bisphosphate carboxylase, chlorophyll A/B binding protein, protochlorophyllide reductase, rRNA, etc. It also controls the expression of its own gene(s) in a negative feedback fashion. This is Phytochrome A (PHYA) from Pisum sativum (Garden pea).